We begin with the raw amino-acid sequence, 158 residues long: SsrA-binding protein (158 aa).

It belongs to the SmpB family.

The protein resides in the cytoplasm. Its function is as follows. Required for rescue of stalled ribosomes mediated by trans-translation. Binds to transfer-messenger RNA (tmRNA), required for stable association of tmRNA with ribosomes. tmRNA and SmpB together mimic tRNA shape, replacing the anticodon stem-loop with SmpB. tmRNA is encoded by the ssrA gene; the 2 termini fold to resemble tRNA(Ala) and it encodes a 'tag peptide', a short internal open reading frame. During trans-translation Ala-aminoacylated tmRNA acts like a tRNA, entering the A-site of stalled ribosomes, displacing the stalled mRNA. The ribosome then switches to translate the ORF on the tmRNA; the nascent peptide is terminated with the 'tag peptide' encoded by the tmRNA and targeted for degradation. The ribosome is freed to recommence translation, which seems to be the essential function of trans-translation. In Saccharopolyspora erythraea (strain ATCC 11635 / DSM 40517 / JCM 4748 / NBRC 13426 / NCIMB 8594 / NRRL 2338), this protein is SsrA-binding protein.